Here is a 286-residue protein sequence, read N- to C-terminus: Phosphoribosylaminoimidazole-succinocarboxamide synthase (286 aa).

This sequence belongs to the SAICAR synthetase family.

The enzyme catalyses 5-amino-1-(5-phospho-D-ribosyl)imidazole-4-carboxylate + L-aspartate + ATP = (2S)-2-[5-amino-1-(5-phospho-beta-D-ribosyl)imidazole-4-carboxamido]succinate + ADP + phosphate + 2 H(+). Its pathway is purine metabolism; IMP biosynthesis via de novo pathway; 5-amino-1-(5-phospho-D-ribosyl)imidazole-4-carboxamide from 5-amino-1-(5-phospho-D-ribosyl)imidazole-4-carboxylate: step 1/2. This chain is Phosphoribosylaminoimidazole-succinocarboxamide synthase, found in Mannheimia succiniciproducens (strain KCTC 0769BP / MBEL55E).